Consider the following 471-residue polypeptide: Ribulose bisphosphate carboxylase large chain 2 (471 aa).

Residues Asn-116 and Thr-166 each coordinate substrate. Lys-168 acts as the Proton acceptor in catalysis. Lys-170 lines the substrate pocket. 3 residues coordinate Mg(2+): Lys-194, Asp-196, and Glu-197. N6-carboxylysine is present on Lys-194. His-287 acts as the Proton acceptor in catalysis. Arg-288, His-320, and Ser-372 together coordinate substrate.

It belongs to the RuBisCO large chain family. Type I subfamily. Heterohexadecamer of 8 large chains and 8 small chains; disulfide-linked. The disulfide link is formed within the large subunit homodimers. The cofactor is Mg(2+). The disulfide bond which can form in the large chain dimeric partners within the hexadecamer appears to be associated with oxidative stress and protein turnover.

The catalysed reaction is 2 (2R)-3-phosphoglycerate + 2 H(+) = D-ribulose 1,5-bisphosphate + CO2 + H2O. It catalyses the reaction D-ribulose 1,5-bisphosphate + O2 = 2-phosphoglycolate + (2R)-3-phosphoglycerate + 2 H(+). In terms of biological role, ruBisCO catalyzes two reactions: the carboxylation of D-ribulose 1,5-bisphosphate, the primary event in carbon dioxide fixation, as well as the oxidative fragmentation of the pentose substrate. Both reactions occur simultaneously and in competition at the same active site. The sequence is that of Ribulose bisphosphate carboxylase large chain 2 from Allochromatium vinosum (strain ATCC 17899 / DSM 180 / NBRC 103801 / NCIMB 10441 / D) (Chromatium vinosum).